Consider the following 153-residue polypeptide: MTTLAFSYAVNLLSRREYSEFEIRCKMQEKAFSEQEIEDTLAQLQQKNWQSDKRFTENYLRARAQRGYGVNRIKQELRQLKGILPETVDEALMECDIDWSEIALNVLAKKFPDYRARQDAKNKQKIWRYMLSHGFFAEDFADFIGNGTEDEFY.

This sequence belongs to the RecX family.

Its subcellular location is the cytoplasm. Modulates RecA activity. The polypeptide is Regulatory protein RecX (Mannheimia succiniciproducens (strain KCTC 0769BP / MBEL55E)).